The chain runs to 855 residues: Photoactivated adenylate cyclase subunit beta-like protein 1224-5/9F (855 aa).

Residues 56-149 (LRRLMYLSKG…GRMSGVWHMK (94 aa)) enclose the BLUF 1 domain. The interval 420–444 (RPPIFDDTPKCNPRPRTPGCEGRQR) is disordered. Residues 471-563 (VPTLTYISHA…RVYPSEWTLT (93 aa)) enclose the BLUF 2 domain. Basic and acidic residues predominate over residues 813–827 (RSGEKPLTEPEEAKL). The disordered stretch occupies residues 813–855 (RSGEKPLTEPEEAKLDFSPGRVRHGDSGRRSNSAQGKLSIQVR). The segment covering 842-855 (RSNSAQGKLSIQVR) has biased composition (polar residues).

In terms of assembly, heterotetramer of two alpha and two beta subunits.

The protein resides in the cell projection. The protein localises to the cilium. Its subcellular location is the flagellum. The protein is Photoactivated adenylate cyclase subunit beta-like protein 1224-5/9F of Euglena gracilis.